A 527-amino-acid polypeptide reads, in one-letter code: L-amino-acid oxidase (527 aa).

A signal peptide spans 1 to 27 (MDLHRAPWKSSAAAAVLLLALFSGAAA). Cysteine 37 and cysteine 200 form a disulfide bridge. Asparagine 58 is a glycosylation site (N-linked (GlcNAc...) asparagine). FAD contacts are provided by residues 70 to 71 (VA), 90 to 91 (EA), arginine 98, 114 to 117 (GAMR), and valine 288. Arginine 117 contributes to the substrate binding site. Asparagine 393 carries an N-linked (GlcNAc...) asparagine glycan. Substrate is bound at residue tyrosine 403. FAD is bound by residues glutamate 485 and 492 to 497 (AWMESA). Substrate is bound at residue 492–493 (AW).

In terms of assembly, homodimer. It depends on FAD as a cofactor. As to expression, expression mainly observed in plasma, spleen, kidney and gills with low levels detected in blood and no expression detected in brain, liver, heart, muscle or intestine (at protein level).

Its subcellular location is the secreted. The catalysed reaction is an L-alpha-amino acid + O2 + H2O = a 2-oxocarboxylate + H2O2 + NH4(+). Inhibits the growth of both Gram-negative and Gram-positive bacteria. Displays strong antibacterial activity towards V.cholerae and E.tarda. Causes deformation of the surface of S.aureus and the formation of pores on the surface of E.coli. Strong antiparasitic activity is seen towards C.irritans, T.brucei and I.multifiliis. Cilia of treated theronts are lost and the macronucleus swells, inducing cell membrane rupture and efflux of the cytoplasm. The protein is L-amino-acid oxidase of Siganus canaliculatus (White-spotted spinefoot).